The following is a 267-amino-acid chain: Beta-lactamase OXA-5 (267 aa).

A signal peptide spans 1–19; the sequence is MKTIAAYLVLVFYASTALS. Residue Ser-67 is the Acyl-ester intermediate of the active site. Lys-70 bears the N6-carboxylysine mark. 205–207 is a binding site for substrate; it reads KTG.

The protein belongs to the class-D beta-lactamase family.

It catalyses the reaction a beta-lactam + H2O = a substituted beta-amino acid. With respect to regulation, inhibited by clavulanic acid. In terms of biological role, hydrolyzes both oxacillin and methicillin. The protein is Beta-lactamase OXA-5 (bla) of Pseudomonas aeruginosa.